The sequence spans 407 residues: FMN-dependent alpha-hydroxy acid dehydrogenase PB1A11.03 (407 aa).

In terms of domain architecture, FMN hydroxy acid dehydrogenase spans 28-406; that stretch reads QRPQITVDGR…DLNRDVLYKE (379 aa). Position 54 (Tyr-54) interacts with a 2-oxocarboxylate. FMN is bound by residues Ser-136 and Gln-158. Tyr-160 contributes to the a 2-oxocarboxylate binding site. An FMN-binding site is contributed by Thr-188. An a 2-oxocarboxylate-binding site is contributed by Arg-197. Lys-277 lines the FMN pocket. The Proton acceptor role is filled by His-301. A 2-oxocarboxylate is bound at residue Arg-304. Residues 332-336 and 355-356 contribute to the FMN site; these read DSGVR and GR.

The protein belongs to the FMN-dependent alpha-hydroxy acid dehydrogenase family. FMN serves as cofactor.

Its subcellular location is the cytoplasm. It localises to the nucleus. This chain is FMN-dependent alpha-hydroxy acid dehydrogenase PB1A11.03, found in Schizosaccharomyces pombe (strain 972 / ATCC 24843) (Fission yeast).